An 879-amino-acid polypeptide reads, in one-letter code: DNA mismatch repair protein MutS (879 aa).

629 to 636 (GPNMAGKS) contributes to the ATP binding site. The interval 824–845 (VGGQPQKELSEHKPHQPSLFAP) is disordered.

It belongs to the DNA mismatch repair MutS family.

Functionally, this protein is involved in the repair of mismatches in DNA. It is possible that it carries out the mismatch recognition step. This protein has a weak ATPase activity. This is DNA mismatch repair protein MutS from Desulfotalea psychrophila (strain LSv54 / DSM 12343).